The primary structure comprises 477 residues: MEQHGTNEGALWGGRFSGGPSEAMFALSVSTHFDWVLAPYDVLASKAHAKVLHQAELLSDEDLATMLAGLDQLGKDVADGAFGPLPSDEDVHGAMERGLIDRVGPEVGGRLRAGRSRNDQVATLFRMWVRDAVRDIALGTTELVDALSAQAKAHADAIMPGKTHFQAAQPVLLAHQLLAHAQPLLRDIDRIRDLDKRLAVSPYGSGALAGSSLKLNPEAIAEELGFDSAADNSIDATSSRDFASETAFVLAQLAVDMSRLAEEIIAWCTPEFGYITLSDSWSTGSSIMPQKKNPDVAELTRGKSGRLIGNLTGLLATLKAQPLAYNRDLQEDKEPIVDSVAQLNLLLPAMTGLVSTLTFNTERMRELAPAGFTLATDLAEWMVRQGVPFREAHEASGACVRIAESRGVDLIDLTDEELSGVDARLTPEVREVLTIDGAVASRATRGGTAGVRVAEQRARVDAASTAHAEWARAGVRR.

This sequence belongs to the lyase 1 family. Argininosuccinate lyase subfamily.

The protein localises to the cytoplasm. It carries out the reaction 2-(N(omega)-L-arginino)succinate = fumarate + L-arginine. Its pathway is amino-acid biosynthesis; L-arginine biosynthesis; L-arginine from L-ornithine and carbamoyl phosphate: step 3/3. This Corynebacterium glutamicum (strain R) protein is Argininosuccinate lyase.